The chain runs to 268 residues: Casein kinase II subunit beta (268 aa).

The tract at residues 222-268 (LSNNNQNNQNNNINNNNNNNNNNNNNNNNNNNNQQNNNNQQNNNTNK) is disordered. Low complexity predominate over residues 224–268 (NNNQNNQNNNINNNNNNNNNNNNNNNNNNNNQQNNNNQQNNNTNK).

The protein belongs to the casein kinase 2 subunit beta family. In terms of assembly, casein kinase II/CK2 is a tetramer composed of two alpha subunit and two beta subunits.

Functionally, regulatory subunit of casein kinase II/CK2. As part of the kinase complex regulates the basal catalytic activity of the alpha subunit a constitutively active serine/threonine-protein kinase that phosphorylates a large number of substrates containing acidic residues C-terminal to the phosphorylated serine or threonine. The chain is Casein kinase II subunit beta (csnk2b) from Dictyostelium discoideum (Social amoeba).